The chain runs to 116 residues: Small ribosomal subunit protein uS10m (116 aa).

This sequence belongs to the universal ribosomal protein uS10 family.

The protein localises to the mitochondrion. The sequence is that of Small ribosomal subunit protein uS10m (RPS10) from Reclinomonas americana.